The primary structure comprises 81 residues: Small ribosomal subunit protein eS21 (81 aa).

This sequence belongs to the eukaryotic ribosomal protein eS21 family.

The polypeptide is Small ribosomal subunit protein eS21 (RPS21) (Zea mays (Maize)).